Reading from the N-terminus, the 514-residue chain is Alstonine synthase (514 aa).

Residues 4-24 (PQFSCLLPAFFLLVVFLFLLI) traverse the membrane as a helical segment. N-linked (GlcNAc...) asparagine glycosylation occurs at asparagine 428. A heme-binding site is contributed by cysteine 450.

The protein belongs to the cytochrome P450 family. The cofactor is heme.

It is found in the membrane. The catalysed reaction is tetrahydroalstonine + A + reduced [NADPH--hemoprotein reductase] + O2 = alstonine + AH2 + oxidized [NADPH--hemoprotein reductase] + 2 H2O + H(+). It functions in the pathway alkaloid biosynthesis. In terms of biological role, a cytochrome P450 monooxygenase involved in the biosynthesis of pentacyclic alkaloids natural products such as alstonine, putative antipsychotic compounds. Catalyzes the conversion of tetrahydroalstonine to alstonine. No oxidative activity towards ajmalicine. This is Alstonine synthase from Alstonia scholaris (Dogbane).